The primary structure comprises 516 residues: Delta(24)-sterol reductase (516 aa).

Positions 1-22 (MEPAVSLAVCALLFLLWVRLKG) are cleaved as a signal peptide. Residues 23–31 (LEFVLIHQR) are Lumenal-facing. A helical transmembrane segment spans residues 32 to 52 (WVFVCLFLLPLSLIFDIYYYV). Topologically, residues 53–516 (RAWVVFKLSS…YDKICKAARH (464 aa)) are cytoplasmic. Residues 58–234 (FKLSSAPRLH…VAAEIRIIPA (177 aa)) enclose the FAD-binding PCMH-type domain. 163–175 (TVGGLIMGTGIES) is an FAD binding site.

The protein belongs to the FAD-binding oxidoreductase/transferase type 4 family. In terms of assembly, interacts with DHCR7; this interaction regulates DHCR7 activity. Requires FAD as cofactor. In terms of tissue distribution, highly expressed in brain and adrenal gland with moderate expression in liver, lung, spleen, prostate and spinal cord. Low expression in heart, uterus and prostate. Undetectable in blood cells. In the brain, strongly expressed in cortical regions, substantia nigra, caudate nucleus, hippocampus, medulla oblongata and pons. In brains affected by Alzheimer disease, expression in the inferior temporal lobe is substantially lower than in the frontal cortex.

Its subcellular location is the endoplasmic reticulum membrane. It is found in the golgi apparatus membrane. It carries out the reaction cholesterol + NADP(+) = desmosterol + NADPH + H(+). The enzyme catalyses lanosterol + NADPH + H(+) = 24,25-dihydrolanosterol + NADP(+). The catalysed reaction is 5alpha-cholest-8-en-3beta-ol + NADP(+) = zymosterol + NADPH + H(+). The protein operates within steroid biosynthesis; cholesterol biosynthesis. Its function is as follows. Catalyzes the reduction of the delta-24 double bond of sterol intermediates during cholesterol biosynthesis. In addition to its cholesterol-synthesizing activity, can protect cells from oxidative stress by reducing caspase 3 activity during apoptosis induced by oxidative stress. Also protects against amyloid-beta peptide-induced apoptosis. This Homo sapiens (Human) protein is Delta(24)-sterol reductase (DHCR24).